We begin with the raw amino-acid sequence, 360 residues long: Lipid-A-disaccharide synthase (360 aa).

The protein belongs to the LpxB family.

It catalyses the reaction a lipid X + a UDP-2-N,3-O-bis[(3R)-3-hydroxyacyl]-alpha-D-glucosamine = a lipid A disaccharide + UDP + H(+). It functions in the pathway bacterial outer membrane biogenesis; LPS lipid A biosynthesis. Condensation of UDP-2,3-diacylglucosamine and 2,3-diacylglucosamine-1-phosphate to form lipid A disaccharide, a precursor of lipid A, a phosphorylated glycolipid that anchors the lipopolysaccharide to the outer membrane of the cell. In Helicobacter acinonychis (strain Sheeba), this protein is Lipid-A-disaccharide synthase.